Reading from the N-terminus, the 561-residue chain is MRLTPYPIALTTLMIALTTLPETGLGIARDALSQVGVIQSKARSLMYYSDGSSSFIVVKLLPTLPTPSGNCNLTSITAYNTTLFKLLTPLMENLDTIVSANQAGSRRKRFAGVVVGLAALGVATAAQVTAAVAVVKANANAAAINKLAASIQSTNAAISDVISSTRTLATAIQAVQDHVNGVLASGLTEANCRSQDALIGSILNLYLTELTTIFHNQIVNPALTPLSIQALRIILGSTLPLIVESRWNTNLNTAELLSSGLLTGQIISISPSYMQMVIQITVPTFVMQPGAKIIDLVTITANRMEEEVLIQVPPRILEYANEIQAYTADDCVVTPHAVFCKYNDGSPISDSLYQCLKGNLTSCVFTPVVGNYLKRFAFANGVMYVNCKALLCRCADPPMVITQDDLAGITVIDITVCREVMLDTLAFKITSLNNVTYGANFSMLAAAIKDLSPLDLSAQLAQVNKSLASAEEKIAQSSSLAAQAVSQEATITVGSVAMLIAVLALIAGCTGIMIAVQMSRRLEVLRHLTDQSIISNHHYAELNPPPYNHSYESLHPIPQSH.

The first 26 residues, M1–G26, serve as a signal peptide directing secretion. The Extracellular portion of the chain corresponds to I27–S495. Intrachain disulfides connect C71/C192, C331/C340, C355/C363, C387/C392, and C394/C417. 2 N-linked (GlcNAc...) asparagine; by host glycosylation sites follow: N72 and N80. The segment at F110–V134 is fusion peptide. A coiled-coil region spans residues V135–S163. N-linked (GlcNAc...) asparagine; by host glycosylation is present at N359. N-linked (GlcNAc...) asparagine; by host glycosylation is found at N434, N440, and N464. Positions Q459–A484 form a coiled coil. A helical membrane pass occupies residues V496–V516. Residues Q517–H561 are Cytoplasmic-facing.

This sequence belongs to the paramyxoviruses fusion glycoprotein family. As to quaternary structure, homotrimer of disulfide-linked F1-F2. The inactive precursor F0 is glycosylated and proteolytically cleaved into F1 and F2 to be functionally active. The cleavage is mediated by cellular proteases during the transport and maturation of the polypeptide.

It localises to the virion membrane. The protein resides in the host cell membrane. In terms of biological role, class I viral fusion protein. Under the current model, the protein has at least 3 conformational states: pre-fusion native state, pre-hairpin intermediate state, and post-fusion hairpin state. During viral and plasma cell membrane fusion, the heptad repeat (HR) regions assume a trimer-of-hairpins structure, positioning the fusion peptide in close proximity to the C-terminal region of the ectodomain. The formation of this structure appears to drive apposition and subsequent fusion of viral and plasma cell membranes. Directs fusion of viral and cellular membranes leading to delivery of the nucleocapsid into the cytoplasm. This fusion is pH independent and occurs directly at the outer cell membrane. The trimer of F1-F2 (F protein) probably interacts with HN at the virion surface. Upon HN binding to its cellular receptor, the hydrophobic fusion peptide is unmasked and interacts with the cellular membrane, inducing the fusion between cell and virion membranes. Later in infection, F proteins expressed at the plasma membrane of infected cells could mediate fusion with adjacent cells to form syncytia, a cytopathic effect that could lead to tissue necrosis. In Simiiformes (SV41), this protein is Fusion glycoprotein F0 (F).